Here is a 156-residue protein sequence, read N- to C-terminus: Probable inactive ribonuclease-like protein 13 (156 aa).

The N-terminal stretch at 1 to 20 (MAPAVTRLLFLQLVLGPTLV) is a signal peptide. Asn126 is a glycosylation site (N-linked (GlcNAc...) asparagine).

This sequence belongs to the pancreatic ribonuclease family.

It localises to the secreted. Its function is as follows. Does not exhibit any ribonuclease activity. The chain is Probable inactive ribonuclease-like protein 13 (RNASE13) from Homo sapiens (Human).